Reading from the N-terminus, the 555-residue chain is Phosphoglucomutase (555 aa).

Substrate contacts are provided by residues T45, R49, 148–149 (SH), and K158. S148 functions as the Phosphoserine intermediate in the catalytic mechanism. S148 contributes to the Mg(2+) binding site. Mg(2+) is bound by residues D306, D308, and D310. Residues 310–311 (DR) and 393–395 (EES) each bind substrate.

The protein belongs to the phosphohexose mutase family. Requires Mg(2+) as cofactor.

It catalyses the reaction alpha-D-glucose 1-phosphate = alpha-D-glucose 6-phosphate. In terms of biological role, this enzyme participates in both the breakdown and synthesis of glucose. This Komagataeibacter xylinus (Gluconacetobacter xylinus) protein is Phosphoglucomutase (celB).